The primary structure comprises 295 residues: Pyridoxal 5'-phosphate synthase subunit PdxS (295 aa).

Asp25 is a binding site for D-ribose 5-phosphate. The Schiff-base intermediate with D-ribose 5-phosphate role is filled by Lys82. Gly154 is a D-ribose 5-phosphate binding site. A D-glyceraldehyde 3-phosphate-binding site is contributed by Arg166. D-ribose 5-phosphate contacts are provided by residues Gly215 and Gly236–Ser237.

It belongs to the PdxS/SNZ family. In the presence of PdxT, forms a dodecamer of heterodimers.

It carries out the reaction aldehydo-D-ribose 5-phosphate + D-glyceraldehyde 3-phosphate + L-glutamine = pyridoxal 5'-phosphate + L-glutamate + phosphate + 3 H2O + H(+). It participates in cofactor biosynthesis; pyridoxal 5'-phosphate biosynthesis. Catalyzes the formation of pyridoxal 5'-phosphate from ribose 5-phosphate (RBP), glyceraldehyde 3-phosphate (G3P) and ammonia. The ammonia is provided by the PdxT subunit. Can also use ribulose 5-phosphate and dihydroxyacetone phosphate as substrates, resulting from enzyme-catalyzed isomerization of RBP and G3P, respectively. This Dictyoglomus turgidum (strain DSM 6724 / Z-1310) protein is Pyridoxal 5'-phosphate synthase subunit PdxS.